A 735-amino-acid chain; its full sequence is Mitochondrial potassium channel ATP-binding subunit (735 aa).

Residues 1–25 constitute a mitochondrion transit peptide; the sequence is MLVHLFRVGIRGGPFPGRLLPPLRF. Over 26-144 the chain is Mitochondrial matrix; the sequence is QTFSAVRNTW…KLFWQFLHPH (119 aa). A helical membrane pass occupies residues 145–165; sequence LLVLGVAVVLALGAALVNVQI. The region spanning 150 to 437 is the ABC transmembrane type-1 domain; sequence VAVVLALGAA…LSVLFGQVVR (288 aa). At 166 to 195 the chain is on the mitochondrial intermembrane side; sequence PLLLGQLVEVVAKYTRDHVGSFMTESQNLS. The helical transmembrane segment at 196 to 216 threads the bilayer; sequence THLLILYGVQGLLTFGYLVLL. Residues 217–295 are Mitochondrial matrix-facing; the sequence is SHVGERMAVD…SLSMLSTRLT (79 aa). Residues 296-316 form a helical membrane-spanning segment; sequence LLLMVATPALMGVGTLMGSGL. The Mitochondrial intermembrane portion of the chain corresponds to 317–735; it reads RKLSRQCQEQ…EGPRSHQHKS (419 aa). An ABC transporter domain is found at 472-709; it reads VTFQNVCFSY…GGLYAELIRR (238 aa). 507 to 514 serves as a coordination point for ATP; it reads GQSGGGKT. Residues 712-735 are disordered; sequence LDAPRTAAPPPKKPEGPRSHQHKS.

Belongs to the ABC transporter superfamily. ABCB family. Multidrug resistance exporter (TC 3.A.1.201) subfamily. As to quaternary structure, the mitochondrial potassium channel (mitoK(ATP)) is composed of 4 subunits of CCDC51/MITOK and 4 subunits of ABCB8/MITOSUR. Interacts with C10orf88/PAAT. Interacts with NRP1; NRP1 regulates ABCB8/MITOSUR protein levels in mitochondria. In terms of tissue distribution, ubiquitous.

It localises to the mitochondrion inner membrane. Channel activity inhibited by ATP via ABCB8/MITOSUR subunit. Functionally, ATP-binding subunit of the mitochondrial ATP-gated potassium channel (mitoK(ATP)). Together with pore-forming subunit CCDC51/MITOK of the mitoK(ATP) channel, mediates ATP-dependent potassium currents across the mitochondrial inner membrane. An increase in ATP intracellular levels closes the channel, inhibiting K(+) transport, whereas a decrease in ATP levels enhances K(+) uptake in the mitochondrial matrix. Plays a role in mitochondrial iron transport. Required for maintenance of normal cardiac function, possibly by influencing mitochondrial iron export and regulating the maturation of cytosolic iron sulfur cluster-containing enzymes. The sequence is that of Mitochondrial potassium channel ATP-binding subunit from Homo sapiens (Human).